Here is a 194-residue protein sequence, read N- to C-terminus: CASP-like protein 4C1 (194 aa).

Over 1–35 (MRSPHAFRNGESPTLRDHTHFHSTVTAQKLRRFNS) the chain is Cytoplasmic. A helical transmembrane segment spans residues 36–56 (LILLLRLASFSFSLASAVFML). At 57–74 (TNSRGSASPHWYDFDAFR) the chain is on the extracellular side. The chain crosses the membrane as a helical span at residues 75-95 (FVFVANAIVALYSVFEMGTCV). The Cytoplasmic segment spans residues 96-114 (WEFSRETTLWPEAFQVWFD). Residues 115–135 (FGHDQVFSYLLLSAGSAAAAL) traverse the membrane as a helical segment. Residues 136–157 (ARTMRGGDTCTANKAFCLQSDV) lie on the Extracellular side of the membrane. The helical transmembrane segment at 158–178 (AIGLGFAAFLFLAFSSCFSGF) threads the bilayer. The Cytoplasmic segment spans residues 179 to 194 (RVACFLITGSRFHLYS).

The protein belongs to the Casparian strip membrane proteins (CASP) family. Homodimer and heterodimers.

It localises to the cell membrane. The sequence is that of CASP-like protein 4C1 from Arabidopsis thaliana (Mouse-ear cress).